Here is a 246-residue protein sequence, read N- to C-terminus: Ubiquinone biosynthesis O-methyltransferase (246 aa).

S-adenosyl-L-methionine is bound by residues arginine 40, glycine 70, aspartate 91, and methionine 135.

This sequence belongs to the methyltransferase superfamily. UbiG/COQ3 family.

It carries out the reaction a 3-demethylubiquinol + S-adenosyl-L-methionine = a ubiquinol + S-adenosyl-L-homocysteine + H(+). It catalyses the reaction a 3-(all-trans-polyprenyl)benzene-1,2-diol + S-adenosyl-L-methionine = a 2-methoxy-6-(all-trans-polyprenyl)phenol + S-adenosyl-L-homocysteine + H(+). Its pathway is cofactor biosynthesis; ubiquinone biosynthesis. Functionally, O-methyltransferase that catalyzes the 2 O-methylation steps in the ubiquinone biosynthetic pathway. This Colwellia psychrerythraea (strain 34H / ATCC BAA-681) (Vibrio psychroerythus) protein is Ubiquinone biosynthesis O-methyltransferase.